A 466-amino-acid chain; its full sequence is Asparagine--tRNA ligase (466 aa).

This sequence belongs to the class-II aminoacyl-tRNA synthetase family. In terms of assembly, homodimer.

The protein localises to the cytoplasm. It carries out the reaction tRNA(Asn) + L-asparagine + ATP = L-asparaginyl-tRNA(Asn) + AMP + diphosphate + H(+). The polypeptide is Asparagine--tRNA ligase (Vibrio vulnificus (strain YJ016)).